The chain runs to 181 residues: ATP-dependent protease subunit HslV (181 aa).

Threonine 9 is a catalytic residue. Glycine 164, cysteine 167, and threonine 170 together coordinate Na(+).

The protein belongs to the peptidase T1B family. HslV subfamily. As to quaternary structure, a double ring-shaped homohexamer of HslV is capped on each side by a ring-shaped HslU homohexamer. The assembly of the HslU/HslV complex is dependent on binding of ATP.

The protein localises to the cytoplasm. The catalysed reaction is ATP-dependent cleavage of peptide bonds with broad specificity.. With respect to regulation, allosterically activated by HslU binding. In terms of biological role, protease subunit of a proteasome-like degradation complex believed to be a general protein degrading machinery. This is ATP-dependent protease subunit HslV from Gemmatimonas aurantiaca (strain DSM 14586 / JCM 11422 / NBRC 100505 / T-27).